The sequence spans 96 residues: Putative pterin-4-alpha-carbinolamine dehydratase (96 aa).

The protein belongs to the pterin-4-alpha-carbinolamine dehydratase family.

It carries out the reaction (4aS,6R)-4a-hydroxy-L-erythro-5,6,7,8-tetrahydrobiopterin = (6R)-L-erythro-6,7-dihydrobiopterin + H2O. This chain is Putative pterin-4-alpha-carbinolamine dehydratase, found in Prochlorococcus marinus subsp. pastoris (strain CCMP1986 / NIES-2087 / MED4).